The sequence spans 355 residues: Probable butyrate kinase (355 aa).

The protein belongs to the acetokinase family.

Its subcellular location is the cytoplasm. It carries out the reaction butanoate + ATP = butanoyl phosphate + ADP. This chain is Probable butyrate kinase, found in Clostridium botulinum (strain Alaska E43 / Type E3).